A 405-amino-acid polypeptide reads, in one-letter code: Arginine biosynthesis bifunctional protein ArgJ (405 aa).

Substrate contacts are provided by Thr-155, Lys-181, Thr-192, Glu-278, Asn-400, and Thr-405. The Nucleophile role is filled by Thr-192.

Belongs to the ArgJ family. As to quaternary structure, heterotetramer of two alpha and two beta chains.

The protein localises to the cytoplasm. It catalyses the reaction N(2)-acetyl-L-ornithine + L-glutamate = N-acetyl-L-glutamate + L-ornithine. The enzyme catalyses L-glutamate + acetyl-CoA = N-acetyl-L-glutamate + CoA + H(+). Its pathway is amino-acid biosynthesis; L-arginine biosynthesis; L-ornithine and N-acetyl-L-glutamate from L-glutamate and N(2)-acetyl-L-ornithine (cyclic): step 1/1. The protein operates within amino-acid biosynthesis; L-arginine biosynthesis; N(2)-acetyl-L-ornithine from L-glutamate: step 1/4. Functionally, catalyzes two activities which are involved in the cyclic version of arginine biosynthesis: the synthesis of N-acetylglutamate from glutamate and acetyl-CoA as the acetyl donor, and of ornithine by transacetylation between N(2)-acetylornithine and glutamate. This chain is Arginine biosynthesis bifunctional protein ArgJ, found in Dehalococcoides mccartyi (strain CBDB1).